Here is a 611-residue protein sequence, read N- to C-terminus: UvrABC system protein C (611 aa).

The region spanning 14–91 (TSPGCYIHKD…IKENQPKYNI (78 aa)) is the GIY-YIG domain. A UVR domain is found at 196 to 231 (DQIIEDLRGKMAGAAQAMEFEKAAEYRDLIQSIGTL). Positions 587-611 (KLNPKTQEQEQAQLREVAEPQIGLE) are disordered.

Belongs to the UvrC family. As to quaternary structure, interacts with UvrB in an incision complex.

The protein localises to the cytoplasm. In terms of biological role, the UvrABC repair system catalyzes the recognition and processing of DNA lesions. UvrC both incises the 5' and 3' sides of the lesion. The N-terminal half is responsible for the 3' incision and the C-terminal half is responsible for the 5' incision. In Streptococcus sanguinis (strain SK36), this protein is UvrABC system protein C.